Reading from the N-terminus, the 246-residue chain is Myelin-oligodendrocyte glycoprotein (246 aa).

The signal sequence occupies residues 1–28 (MASLLSSSLPSCLPSLLFLLLQLTSSSA). The Ig-like V-type domain occupies 29-144 (GQFRVIGPGH…EEAAMELKVE (116 aa)). The Extracellular segment spans residues 29-153 (GQFRVIGPGH…EDPFYWINPG (125 aa)). Cysteines 52 and 126 form a disulfide. Asparagine 59 carries N-linked (GlcNAc...) asparagine glycosylation. Residues 154–174 (VLVLIAVLPVLLLQITVGLVF) traverse the membrane as a helical segment. The Cytoplasmic segment spans residues 175-209 (LCLQRRLRGKLWAEIENLHRTFDPHFLMVPCWKIT). Residues 210-230 (LFVIVPVLGPLVALIICYNWL) form a helical membrane-spanning segment. Over 231-246 (HRRLAGQFLEELRNPF) the chain is Extracellular.

The protein belongs to the immunoglobulin superfamily. BTN/MOG family. As to quaternary structure, homodimer. As to expression, found exclusively in the CNS, where it is localized on the surface of myelin and oligodendrocyte cytoplasmic membranes.

The protein localises to the membrane. Mediates homophilic cell-cell adhesion. Minor component of the myelin sheath. May be involved in completion and/or maintenance of the myelin sheath and in cell-cell communication. The protein is Myelin-oligodendrocyte glycoprotein (MOG) of Bos taurus (Bovine).